Consider the following 805-residue polypeptide: 1,4-alpha-glucan-branching enzyme 2-2, chloroplastic/amyloplastic (805 aa).

A chloroplast-targeting transit peptide spans 1–32; sequence MVVIHGVSLTPRFTLPSRPLNTGFNAGNSTLS. The active-site Nucleophile is D451. The active-site Proton donor is the E506.

The protein belongs to the glycosyl hydrolase 13 family. GlgB subfamily. In terms of assembly, monomer. Expressed in seedlings, roots, stems, leaves, inflorescences, seeds and flowers.

The protein localises to the plastid. It localises to the chloroplast stroma. It is found in the amyloplast. The enzyme catalyses Transfers a segment of a (1-&gt;4)-alpha-D-glucan chain to a primary hydroxy group in a similar glucan chain.. The protein operates within glycan biosynthesis; starch biosynthesis. In terms of biological role, catalyzes the formation of the alpha-1,6-glucosidic linkages in starch by scission of a 1,4-alpha-linked oligosaccharide from growing alpha-1,4-glucan chains and the subsequent attachment of the oligosaccharide to the alpha-1,6 position. The sequence is that of 1,4-alpha-glucan-branching enzyme 2-2, chloroplastic/amyloplastic (SBE2.2) from Arabidopsis thaliana (Mouse-ear cress).